The primary structure comprises 241 residues: Phosphatidylcholine synthase (241 aa).

The Cytoplasmic segment spans residues 1 to 15 (MKFFNYRRVPYAEIR). A helical transmembrane segment spans residues 16–36 (AFSVHILTASGSFLAFLGVVA). The Periplasmic segment spans residues 37–41 (AAEHR). The chain crosses the membrane as a helical span at residues 42–62 (FVDMFWWLGLALLVDGIDGPI). Residues 63–76 (ARKVQVKEVLPNWS) are Cytoplasmic-facing. Residues 77 to 97 (GDTLDNVIDYVTYVLLPAFAL) form a helical membrane-spanning segment. Residues 98 to 100 (YQS) lie on the Periplasmic side of the membrane. The chain crosses the membrane as a helical span at residues 101–121 (GMIGEPWSFVAAGAIVVSSAI). The Cytoplasmic portion of the chain corresponds to 122–133 (YYADMGMKTDEY). A helical membrane pass occupies residues 134–154 (FFSGFPVVWNMVVFTLFVIQA). Topologically, residues 155–156 (SE) are periplasmic. The helical transmembrane segment at 157-177 (VTASIVVFLSVILTFLPINFL) threads the bilayer. The Cytoplasmic segment spans residues 178 to 187 (HPVRVKRLRP). The helical transmembrane segment at 188-208 (LNLGIFLVWSVLGMYALLLHF) threads the bilayer. Topologically, residues 209–211 (ETP) are periplasmic. A helical membrane pass occupies residues 212 to 232 (PWVVVGVVATGLYLYVIGFIL). Residues 233-241 (QIFPKLGRA) are Cytoplasmic-facing.

This sequence belongs to the CDP-alcohol phosphatidyltransferase class-I family. It depends on Mn(2+) as a cofactor.

Its subcellular location is the cell inner membrane. It catalyses the reaction a CDP-1,2-diacyl-sn-glycerol + choline = a 1,2-diacyl-sn-glycero-3-phosphocholine + CMP + H(+). Its activity is regulated as follows. Activated by CDP-diacylglycerol especially in the presence of Triton X-100 (0.1% w/v) at concentrations where micelles are formed. Maximal activation by Triton X-100 at 0.2% w/v, but higher concentrations become inhibitory. Inhibited by EDTA and high concentrations of choline. Its function is as follows. Condenses choline with CDP-diglyceride to produce phosphatidylcholine and CMP. This Rhizobium meliloti (strain 1021) (Ensifer meliloti) protein is Phosphatidylcholine synthase (pcs).